A 40-amino-acid chain; its full sequence is Photosystem II reaction center protein J (40 aa).

Residues 8–28 traverse the membrane as a helical segment; that stretch reads IPLWIIGTVTGLLVIGLIGIF.

Belongs to the PsbJ family. PSII is composed of 1 copy each of membrane proteins PsbA, PsbB, PsbC, PsbD, PsbE, PsbF, PsbH, PsbI, PsbJ, PsbK, PsbL, PsbM, PsbT, PsbX, PsbY, PsbZ, Psb30/Ycf12, at least 3 peripheral proteins of the oxygen-evolving complex and a large number of cofactors. It forms dimeric complexes.

It is found in the plastid. The protein localises to the chloroplast thylakoid membrane. Its function is as follows. One of the components of the core complex of photosystem II (PSII). PSII is a light-driven water:plastoquinone oxidoreductase that uses light energy to abstract electrons from H(2)O, generating O(2) and a proton gradient subsequently used for ATP formation. It consists of a core antenna complex that captures photons, and an electron transfer chain that converts photonic excitation into a charge separation. The chain is Photosystem II reaction center protein J from Ipomoea purpurea (Common morning glory).